The following is a 411-amino-acid chain: Methylthioribose-1-phosphate isomerase (411 aa).

Serine 2 is modified (N-acetylserine). Aspartate 280 functions as the Proton donor in the catalytic mechanism. The residue at position 351 (serine 351) is a Phosphoserine.

This sequence belongs to the eIF-2B alpha/beta/delta subunits family. MtnA subfamily. In terms of assembly, homodimer.

It localises to the cytoplasm. The protein localises to the nucleus. It carries out the reaction 5-(methylsulfanyl)-alpha-D-ribose 1-phosphate = 5-(methylsulfanyl)-D-ribulose 1-phosphate. The protein operates within amino-acid biosynthesis; L-methionine biosynthesis via salvage pathway; L-methionine from S-methyl-5-thio-alpha-D-ribose 1-phosphate: step 1/6. Functionally, catalyzes the interconversion of methylthioribose-1-phosphate (MTR-1-P) into methylthioribulose-1-phosphate (MTRu-1-P). This Saccharomyces cerevisiae (strain RM11-1a) (Baker's yeast) protein is Methylthioribose-1-phosphate isomerase.